Here is a 176-residue protein sequence, read N- to C-terminus: MTMCSGARLALLVYGIIMHSSVYSSPAAAGLRFPGIRPEEEAYGEDGNPLPDFDGSEPPGAGSPASAPRAAAAWYRPAGRRDVAHGILNEAYRKVLDQLSAGKHLQSLVARGVGGSLGGGAGDDAEPLSKRHSDGIFTDSYSRYRKQMAVKKYLAAVLGKRYKQRVKNKGRRIAYL.

Positions 1-24 are cleaved as a signal peptide; sequence MTMCSGARLALLVYGIIMHSSVYS. The propeptide occupies 25–79; that stretch reads SPAAAGLRFPGIRPEEEAYGEDGNPLPDFDGSEPPGAGSPASAPRAAAAWYRPAG. A disordered region spans residues 39-68; sequence EEEAYGEDGNPLPDFDGSEPPGAGSPASAP. A compositionally biased stretch (low complexity) spans 56–68; it reads SEPPGAGSPASAP. The segment at 150 to 158 is important for receptor binding; it reads VKKYLAAVL. A Leucine amide modification is found at Leu158. At Lys169 the chain carries Lysine amide. The propeptide occupies 173-176; that stretch reads IAYL.

This sequence belongs to the glucagon family.

The protein localises to the secreted. PACAP is a neuropeptide involved in diverse array of physiological processes through activating the PACAP subfamily of class B1 G protein-coupled receptors: VIP receptor 1 (VIPR1), VIP receptor 2 (VIPR2), and PACAP type I receptor (ADCYAP1R1). Exerts neuroprotective and general cytoprotective effects due to anti-apoptotic, anti-inflammatory, and antioxidant actions. Promotes neuron projection development through the RAPGEF2/Rap1/B-Raf/ERK pathway. In chromaffin cells, induces long-lasting increase of intracellular calcium concentrations and neuroendocrine secretion. Involved in the control of glucose homeostasis, induces insulin secretion by pancreatic beta cells. PACAP exists in two bioactive forms from proteolysis of the same precursor protein, PACAP27 and PACAP38, which differ by eleven amino acid residues in the C-terminus. The polypeptide is Pituitary adenylate cyclase-activating polypeptide (Homo sapiens (Human)).